The following is a 329-amino-acid chain: Diaminopimelate epimerase (329 aa).

2 residues coordinate substrate: asparagine 14 and asparagine 73. Residue cysteine 82 is the Proton donor of the active site. Substrate-binding positions include 83 to 84, asparagine 170, asparagine 206, and 224 to 225; these read GN and ER. The active-site Proton acceptor is the cysteine 233. A substrate-binding site is contributed by 234–235; sequence GT.

The protein belongs to the diaminopimelate epimerase family. In terms of assembly, homodimer.

It is found in the cytoplasm. The enzyme catalyses (2S,6S)-2,6-diaminopimelate = meso-2,6-diaminopimelate. The protein operates within amino-acid biosynthesis; L-lysine biosynthesis via DAP pathway; DL-2,6-diaminopimelate from LL-2,6-diaminopimelate: step 1/1. Its function is as follows. Catalyzes the stereoinversion of LL-2,6-diaminopimelate (L,L-DAP) to meso-diaminopimelate (meso-DAP), a precursor of L-lysine and an essential component of the bacterial peptidoglycan. This is Diaminopimelate epimerase from Listeria monocytogenes serovar 1/2a (strain ATCC BAA-679 / EGD-e).